Here is a 149-residue protein sequence, read N- to C-terminus: MKIIIDGDGCAGRDIIEKVGKKHSVKILIYCTINHMINSDYSEVRMVDDGFQSVDMYVANNTYENDIVITQDYGVAAMALGKGALAISPRGYIYDNDNIDRLLFERHLSQKNRRAGGKSKGNHKRNKEDDDRLYYNLEVLIEKVKAISN.

The protein belongs to the UPF0178 family.

The polypeptide is UPF0178 protein CPR_2251 (Clostridium perfringens (strain SM101 / Type A)).